The chain runs to 227 residues: Phosphoribosylformylglycinamidine synthase subunit PurQ (227 aa).

The Glutamine amidotransferase type-1 domain occupies 3-225 (FAVIVLPGSN…VKNWRETHVA (223 aa)). The active-site Nucleophile is the C86. Active-site residues include H194 and E196.

Part of the FGAM synthase complex composed of 1 PurL, 1 PurQ and 2 PurS subunits.

The protein resides in the cytoplasm. It carries out the reaction N(2)-formyl-N(1)-(5-phospho-beta-D-ribosyl)glycinamide + L-glutamine + ATP + H2O = 2-formamido-N(1)-(5-O-phospho-beta-D-ribosyl)acetamidine + L-glutamate + ADP + phosphate + H(+). It catalyses the reaction L-glutamine + H2O = L-glutamate + NH4(+). It functions in the pathway purine metabolism; IMP biosynthesis via de novo pathway; 5-amino-1-(5-phospho-D-ribosyl)imidazole from N(2)-formyl-N(1)-(5-phospho-D-ribosyl)glycinamide: step 1/2. In terms of biological role, part of the phosphoribosylformylglycinamidine synthase complex involved in the purines biosynthetic pathway. Catalyzes the ATP-dependent conversion of formylglycinamide ribonucleotide (FGAR) and glutamine to yield formylglycinamidine ribonucleotide (FGAM) and glutamate. The FGAM synthase complex is composed of three subunits. PurQ produces an ammonia molecule by converting glutamine to glutamate. PurL transfers the ammonia molecule to FGAR to form FGAM in an ATP-dependent manner. PurS interacts with PurQ and PurL and is thought to assist in the transfer of the ammonia molecule from PurQ to PurL. In Bacillus licheniformis (strain ATCC 14580 / DSM 13 / JCM 2505 / CCUG 7422 / NBRC 12200 / NCIMB 9375 / NCTC 10341 / NRRL NRS-1264 / Gibson 46), this protein is Phosphoribosylformylglycinamidine synthase subunit PurQ.